We begin with the raw amino-acid sequence, 171 residues long: Iron-sulfur cluster assembly protein 3 (171 aa).

Residues 1–49 constitute a mitochondrion transit peptide; that stretch reads MLRQTTKRAFLGLASQNPTPFPVVSRLYHPNVIDHYDNPRNVGSFDKND.

This sequence belongs to the NifU family. As to quaternary structure, component of the core Fe-S cluster (ISC) assembly machinery. The cofactor is [2Fe-2S] cluster. In terms of tissue distribution, mostly expressed in flowers and pollen, and, to a lower extent, in leaves and roots.

It localises to the mitochondrion matrix. The protein operates within cofactor biosynthesis; iron-sulfur cluster biosynthesis. In terms of biological role, scaffold protein for the de novo synthesis of iron-sulfur (Fe-S) clusters within mitochondria, which is required for maturation of both mitochondrial and cytoplasmic [2Fe-2S] and [4Fe-4S] proteins. First, a [2Fe-2S] cluster is transiently assembled on the scaffold protein ISCU (ISU1, ISU2 or ISU3). In a second step, the cluster is released from ISCU, transferred to a glutaredoxin, followed by the formation of mitochondrial [2Fe-2S] proteins, the synthesis of [4Fe-4S] clusters and their target-specific insertion into the recipient apoproteins. Cluster assembly on ISCU depends on the function of the cysteine desulfurase complex NFS1-ISD11, which serves as the sulfur donor for cluster synthesis, the iron-binding protein frataxin as the putative iron donor, and the electron transfer chain comprised of ferredoxin reductase and ferredoxin, which receive their electrons from NADH. The protein is Iron-sulfur cluster assembly protein 3 (ISU3) of Arabidopsis thaliana (Mouse-ear cress).